The following is a 515-amino-acid chain: Zinc-binding protein AdcA (515 aa).

A signal peptide spans 1-28 (MKKKILLMMSLISVFFAWQLTQAKQVLA). Position 66 (histidine 66) interacts with Zn(2+). Residues 125 to 148 (DHHHEDADKKHEHNKHSEEGHNHA) are disordered. A his-rich loop region spans residues 129–148 (EDADKKHEHNKHSEEGHNHA). Zn(2+) is bound by residues histidine 152, histidine 216, and glutamate 291.

It belongs to the bacterial solute-binding protein 9 family.

Functionally, part of the ATP-binding cassette (ABC) transport system AdcABC involved in zinc import. Binds zinc with high affinity and specificity and delivers it to the membrane permease for translocation into the cytoplasm. This is Zinc-binding protein AdcA (adcA) from Streptococcus pyogenes serotype M18 (strain MGAS8232).